The following is a 364-amino-acid chain: Geissoschizine synthase (364 aa).

Cysteine 51 serves as a coordination point for Zn(2+). Asparagine 52 contacts NADP(+). 7 residues coordinate Zn(2+): histidine 73, glutamate 74, cysteine 104, cysteine 107, cysteine 110, cysteine 118, and cysteine 168. Residues leucine 194, glycine 196, leucine 197, serine 216, threonine 217, serine 218, lysine 221, arginine 261, valine 280, alanine 282, serine 304, threonine 306, and arginine 351 each contribute to the NADP(+) site.

This sequence belongs to the zinc-containing alcohol dehydrogenase family. Class-III subfamily. Homodimer. It depends on Zn(2+) as a cofactor. In terms of tissue distribution, expressed in leaf epidermis.

It catalyses the reaction (19E)-geissoschizine + NADP(+) = 4,21-dehydrogeissoschizine + NADPH. It participates in alkaloid biosynthesis. Functionally, component of the seco-iridoid and derivatives monoterpenoid indole alkaloids (MIAs, e.g. catharanthine, tabersonine, vincadifformine, vindoline, vincristine, quinine and strychnine) biosynthesis pathway. During the conversion of strictosidine aglycone to geissoschizine, catalyzes iminium reduction on 4,21-dehydrogeissoschizine to produce 19E-geissoschizine, precursor of catharanthine and tabersonine derivatives. May also trigger the production of reactive intermediate used by the HL1, HL2, HL3 and HL4 to form catharanthine, vincadifformine and tabersonine. This is Geissoschizine synthase from Catharanthus roseus (Madagascar periwinkle).